The following is a 124-amino-acid chain: MPTIQQLVRKGRQDKVEKTKTPALKGSPQRRGVCTRVYTTTPKKPNSALRKVARVRLNSGIEVTAYIPGVGHNLQEHSIVLVRGGRVKDLPGVRYKIVRGALDTQGVRNRKQARSRYGAKKEKG.

The disordered stretch occupies residues 1–32; it reads MPTIQQLVRKGRQDKVEKTKTPALKGSPQRRG. The segment covering 11–20 has biased composition (basic and acidic residues); that stretch reads GRQDKVEKTK. Aspartate 89 carries the 3-methylthioaspartic acid modification.

The protein belongs to the universal ribosomal protein uS12 family. As to quaternary structure, part of the 30S ribosomal subunit. Contacts proteins S8 and S17. May interact with IF1 in the 30S initiation complex.

With S4 and S5 plays an important role in translational accuracy. In terms of biological role, interacts with and stabilizes bases of the 16S rRNA that are involved in tRNA selection in the A site and with the mRNA backbone. Located at the interface of the 30S and 50S subunits, it traverses the body of the 30S subunit contacting proteins on the other side and probably holding the rRNA structure together. The combined cluster of proteins S8, S12 and S17 appears to hold together the shoulder and platform of the 30S subunit. This Frankia alni (strain DSM 45986 / CECT 9034 / ACN14a) protein is Small ribosomal subunit protein uS12.